The chain runs to 193 residues: FMN-dependent NADH:quinone oxidoreductase 1 (193 aa).

FMN is bound by residues Ser-9, 15 to 17 (SIS), and 85 to 88 (MYNF).

It belongs to the azoreductase type 1 family. Homodimer. FMN is required as a cofactor.

The enzyme catalyses 2 a quinone + NADH + H(+) = 2 a 1,4-benzosemiquinone + NAD(+). It carries out the reaction N,N-dimethyl-1,4-phenylenediamine + anthranilate + 2 NAD(+) = 2-(4-dimethylaminophenyl)diazenylbenzoate + 2 NADH + 2 H(+). Functionally, quinone reductase that provides resistance to thiol-specific stress caused by electrophilic quinones. Its function is as follows. Also exhibits azoreductase activity. Catalyzes the reductive cleavage of the azo bond in aromatic azo compounds to the corresponding amines. The sequence is that of FMN-dependent NADH:quinone oxidoreductase 1 from Xanthomonas axonopodis pv. citri (strain 306).